A 299-amino-acid polypeptide reads, in one-letter code: F-actin-capping protein subunit alpha-3 (299 aa).

S290 is modified (phosphoserine).

This sequence belongs to the F-actin-capping protein alpha subunit family. As to quaternary structure, component of the F-actin capping complex, composed of a heterodimer of an alpha and a beta subunit. Component of the WASH complex, composed of F-actin-capping protein subunit alpha (CAPZA1, CAPZA2 or CAPZA3), F-actin-capping protein subunit beta (CAPZB), WASH (WASHC1, WASH2P, WASH3P, WASH4P, WASH5P or WASH6P), WASHC2 (WASHC2A or WASHC2C), WASHC3, WASHC4 and WASHC5. In terms of tissue distribution, expressed exclusively in testis and sperm. Highest expression is found in the neck region of ejaculated sperm with lower levels found in the tail and postacrosome region.

It is found in the cytoplasm. Its subcellular location is the cytoskeleton. In terms of biological role, F-actin-capping proteins bind in a Ca(2+)-independent manner to the fast growing ends of actin filaments (barbed end) thereby blocking the exchange of subunits at these ends. Unlike other capping proteins (such as gelsolin and severin), these proteins do not sever actin filaments. May play a role in the morphogenesis of spermatid. This chain is F-actin-capping protein subunit alpha-3 (CAPZA3), found in Homo sapiens (Human).